Here is a 121-residue protein sequence, read N- to C-terminus: Flagellar protein FliT (121 aa).

The segment at 1-50 (MNHAPHLYFAWQQLVEKSQLMLRLATEEQWDELIASEMAYVNAVQEIAHL) is required for homodimerization. The segment at 60–98 (MQEQLRPMLRLILDNESKVKQLLQIRMDELAKLVGQSSV) is fliD binding.

This sequence belongs to the FliT family. In terms of assembly, homodimer. Interacts with FliD and FlhC.

Its subcellular location is the cytoplasm. The protein resides in the cytosol. Functionally, dual-function protein that regulates the transcription of class 2 flagellar operons and that also acts as an export chaperone for the filament-capping protein FliD. As a transcriptional regulator, acts as an anti-FlhDC factor; it directly binds FlhC, thus inhibiting the binding of the FlhC/FlhD complex to class 2 promoters, resulting in decreased expression of class 2 flagellar operons. As a chaperone, effects FliD transition to the membrane by preventing its premature polymerization, and by directing it to the export apparatus. In Escherichia coli O139:H28 (strain E24377A / ETEC), this protein is Flagellar protein FliT.